Consider the following 419-residue polypeptide: Serine hydroxymethyltransferase (419 aa).

(6S)-5,6,7,8-tetrahydrofolate is bound by residues Leu-121 and 125-127 (GHL). An N6-(pyridoxal phosphate)lysine modification is found at Lys-230. Residue 355–357 (SPF) participates in (6S)-5,6,7,8-tetrahydrofolate binding.

It belongs to the SHMT family. In terms of assembly, homodimer. It depends on pyridoxal 5'-phosphate as a cofactor.

The protein resides in the cytoplasm. The enzyme catalyses (6R)-5,10-methylene-5,6,7,8-tetrahydrofolate + glycine + H2O = (6S)-5,6,7,8-tetrahydrofolate + L-serine. The protein operates within one-carbon metabolism; tetrahydrofolate interconversion. Its pathway is amino-acid biosynthesis; glycine biosynthesis; glycine from L-serine: step 1/1. Catalyzes the reversible interconversion of serine and glycine with tetrahydrofolate (THF) serving as the one-carbon carrier. This reaction serves as the major source of one-carbon groups required for the biosynthesis of purines, thymidylate, methionine, and other important biomolecules. Also exhibits THF-independent aldolase activity toward beta-hydroxyamino acids, producing glycine and aldehydes, via a retro-aldol mechanism. The protein is Serine hydroxymethyltransferase of Alkalilimnicola ehrlichii (strain ATCC BAA-1101 / DSM 17681 / MLHE-1).